The following is a 421-amino-acid chain: Enolase 1 (421 aa).

Position 164 (Gln164) interacts with (2R)-2-phosphoglycerate. Glu206 serves as the catalytic Proton donor. Mg(2+)-binding residues include Asp243, Glu287, and Asp314. Residues Lys339, Arg368, Ser369, and Lys390 each coordinate (2R)-2-phosphoglycerate. Lys339 functions as the Proton acceptor in the catalytic mechanism.

The protein belongs to the enolase family. In terms of assembly, component of the RNA degradosome, a multiprotein complex involved in RNA processing and mRNA degradation. It depends on Mg(2+) as a cofactor.

It is found in the cytoplasm. Its subcellular location is the secreted. The protein resides in the cell surface. The enzyme catalyses (2R)-2-phosphoglycerate = phosphoenolpyruvate + H2O. It functions in the pathway carbohydrate degradation; glycolysis; pyruvate from D-glyceraldehyde 3-phosphate: step 4/5. Its function is as follows. Catalyzes the reversible conversion of 2-phosphoglycerate (2-PG) into phosphoenolpyruvate (PEP). It is essential for the degradation of carbohydrates via glycolysis. This Methylococcus capsulatus (strain ATCC 33009 / NCIMB 11132 / Bath) protein is Enolase 1.